The sequence spans 139 residues: ATP synthase epsilon chain (139 aa).

The protein belongs to the ATPase epsilon chain family. In terms of assembly, F-type ATPases have 2 components, CF(1) - the catalytic core - and CF(0) - the membrane proton channel. CF(1) has five subunits: alpha(3), beta(3), gamma(1), delta(1), epsilon(1). CF(0) has three main subunits: a, b and c.

The protein localises to the cell inner membrane. Its function is as follows. Produces ATP from ADP in the presence of a proton gradient across the membrane. The protein is ATP synthase epsilon chain of Actinobacillus pleuropneumoniae serotype 7 (strain AP76).